A 394-amino-acid polypeptide reads, in one-letter code: Elongation factor Tu (394 aa).

One can recognise a tr-type G domain in the interval 10 to 204 (KPHVNVGTIG…ALDSYIPEPQ (195 aa)). The tract at residues 19 to 26 (GHVDHGKT) is G1. A GTP-binding site is contributed by 19–26 (GHVDHGKT). Residue threonine 26 coordinates Mg(2+). Positions 60–64 (GITIN) are G2. The interval 81–84 (DCPG) is G3. Residues 81–85 (DCPGH) and 136–139 (NKCD) each bind GTP. Residues 136 to 139 (NKCD) are G4. Residues 174-176 (SAL) form a G5 region.

The protein belongs to the TRAFAC class translation factor GTPase superfamily. Classic translation factor GTPase family. EF-Tu/EF-1A subfamily. As to quaternary structure, monomer.

It is found in the cytoplasm. It carries out the reaction GTP + H2O = GDP + phosphate + H(+). GTP hydrolase that promotes the GTP-dependent binding of aminoacyl-tRNA to the A-site of ribosomes during protein biosynthesis. This is Elongation factor Tu from Shewanella baltica (strain OS185).